The following is a 431-amino-acid chain: Beta-lactamase hydrolase-like protein (431 aa).

The Zn(2+) site is built by His212, His214, and His286. Asp309 contributes to the substrate binding site.

It belongs to the metallo-beta-lactamase superfamily. Zn(2+) is required as a cofactor.

In terms of biological role, could play a role in cell adherence or biofilm development. This is Beta-lactamase hydrolase-like protein from Agrobacterium fabrum (strain C58 / ATCC 33970) (Agrobacterium tumefaciens (strain C58)).